Here is a 433-residue protein sequence, read N- to C-terminus: Shufflon protein C' (433 aa).

A constant region region spans residues 1 to 361; that stretch reads MKKYDRGWAS…TGAILSCQSG (361 aa). The interval 362 to 433 is variable region; the sequence is RWSGGNKINY…HVDAYCCPFN (72 aa).

This chain is Shufflon protein C', found in Escherichia coli.